A 428-amino-acid polypeptide reads, in one-letter code: Ectonucleoside triphosphate diphosphohydrolase 5 (428 aa).

An N-terminal signal peptide occupies residues 1-24 (MTSSRLPVLLALVFSSLSPVLSHS). The Proton acceptor role is filled by E172. A glycan (N-linked (GlcNAc...) asparagine) is linked at N232. 2 cysteine pairs are disulfide-bonded: C272–C303 and C363–C377.

The protein belongs to the GDA1/CD39 NTPase family. In terms of assembly, monomer; active form. Homodimer; disulfide-linked. Homodimers are enzymatically inactive. Requires Ca(2+) as cofactor. Mg(2+) is required as a cofactor.

It is found in the endoplasmic reticulum. It localises to the secreted. The catalysed reaction is a ribonucleoside 5'-diphosphate + H2O = a ribonucleoside 5'-phosphate + phosphate + H(+). It carries out the reaction GDP + H2O = GMP + phosphate + H(+). The enzyme catalyses UDP + H2O = UMP + phosphate + H(+). It catalyses the reaction IDP + H2O = IMP + phosphate + H(+). The catalysed reaction is CDP + H2O = CMP + phosphate + H(+). It carries out the reaction ADP + H2O = AMP + phosphate + H(+). The protein operates within protein modification; protein glycosylation. Its function is as follows. Hydrolyzes nucleoside diphosphates with a preference for GDP, IDP and UDP compared to ADP and CDP. In the lumen of the endoplasmic reticulum, hydrolyzes UDP that acts as an end-product feedback inhibitor of the UDP-Glc:glycoprotein glucosyltransferases. UMP can be transported back by an UDP-sugar antiporter to the cytosol where it is consumed to regenerate UDP-glucose. Therefore, it positively regulates protein reglucosylation by clearing UDP from the ER lumen and by promoting the regeneration of UDP-glucose. Protein reglucosylation is essential to proper glycoprotein folding and quality control in the ER. The protein is Ectonucleoside triphosphate diphosphohydrolase 5 (ENTPD5) of Gallus gallus (Chicken).